The sequence spans 399 residues: Methylthioribose kinase (399 aa).

Residues asparagine 40, lysine 57, and 111 to 113 contribute to the ATP site; that span reads EDL. Aspartate 229 is a substrate binding site. 246 to 248 is a binding site for ATP; sequence DAE. Arginine 344 serves as a coordination point for substrate.

This sequence belongs to the methylthioribose kinase family. As to quaternary structure, homodimer.

It carries out the reaction 5-(methylsulfanyl)-D-ribose + ATP = 5-(methylsulfanyl)-alpha-D-ribose 1-phosphate + ADP + H(+). Its pathway is amino-acid biosynthesis; L-methionine biosynthesis via salvage pathway; S-methyl-5-thio-alpha-D-ribose 1-phosphate from S-methyl-5'-thioadenosine (hydrolase route): step 2/2. Catalyzes the phosphorylation of methylthioribose into methylthioribose-1-phosphate. The chain is Methylthioribose kinase from Erwinia tasmaniensis (strain DSM 17950 / CFBP 7177 / CIP 109463 / NCPPB 4357 / Et1/99).